The following is a 476-amino-acid chain: MAIKFLEVIKPFCVILPEIQKPERKIQFKEKVLWTAITLFIFLVCCQIPLFGIMSSDSADPFYWMRVILASNRGTLMELGISPIVTSGLIMQLLAGAKIIEVGDTPKDRALFNGAQKLFGMIITIGQSIVYVMTGMYGDPSEMGAGICLLITIQLFVAGLIVLLLDELLQKGYGLGSGISLFIATNICETIVWKAFSPTTVNTGRGMEFEGAIIALFHLLATRTDKVRALREAFYRQNLPNLMNLIATIFVFAVVIYFQGFRVDLPIKSARYRGQYNTYPIKLFYTSNIPIILQSALVSNLYVISQMLSARFSGNLLVSLLGTWSDTSSGGPARAYPVGGLCHYLSPPESFGSVLEDPVHAVVYIVFMLGSCAFFSKTWIEVSGSSAKDVAKQLKEQQMVMRGHRETSMVHELNRYIPTAAAFGGLCIGALSVLADFLGAIGSGTGILLAVTIIYQYFEIFVKEQSEVGSMGALLF.

Residues 2–28 lie on the Cytoplasmic side of the membrane; it reads AIKFLEVIKPFCVILPEIQKPERKIQF. The helical transmembrane segment at 29 to 46 threads the bilayer; that stretch reads KEKVLWTAITLFIFLVCC. Residues 47–80 are Lumenal-facing; the sequence is QIPLFGIMSSDSADPFYWMRVILASNRGTLMELG. The chain crosses the membrane as a helical span at residues 81–97; sequence ISPIVTSGLIMQLLAGA. The Cytoplasmic segment spans residues 98–109; that stretch reads KIIEVGDTPKDR. The chain crosses the membrane as a helical span at residues 110–131; it reads ALFNGAQKLFGMIITIGQSIVY. Topologically, residues 132-148 are lumenal; sequence VMTGMYGDPSEMGAGIC. Residues 149–167 traverse the membrane as a helical segment; it reads LLITIQLFVAGLIVLLLDE. The Cytoplasmic segment spans residues 168-177; it reads LLQKGYGLGS. A helical transmembrane segment spans residues 178 to 196; the sequence is GISLFIATNICETIVWKAF. The Lumenal segment spans residues 197-241; the sequence is SPTTVNTGRGMEFEGAIIALFHLLATRTDKVRALREAFYRQNLPN. The chain crosses the membrane as a helical span at residues 242–259; the sequence is LMNLIATIFVFAVVIYFQ. Residues 260–285 lie on the Cytoplasmic side of the membrane; the sequence is GFRVDLPIKSARYRGQYNTYPIKLFY. The helical transmembrane segment at 286–306 threads the bilayer; it reads TSNIPIILQSALVSNLYVISQ. Topologically, residues 307–356 are lumenal; sequence MLSARFSGNLLVSLLGTWSDTSSGGPARAYPVGGLCHYLSPPESFGSVLE. Residues 357-379 form a helical membrane-spanning segment; the sequence is DPVHAVVYIVFMLGSCAFFSKTW. Residues 380–420 lie on the Cytoplasmic side of the membrane; that stretch reads IEVSGSSAKDVAKQLKEQQMVMRGHRETSMVHELNRYIPTA. The helical transmembrane segment at 421–437 threads the bilayer; sequence AAFGGLCIGALSVLADF. The Lumenal segment spans residues 438-443; sequence LGAIGS. Residues 444–458 form a helical membrane-spanning segment; the sequence is GTGILLAVTIIYQYF. At 459–476 the chain is on the cytoplasmic side; the sequence is EIFVKEQSEVGSMGALLF.

Belongs to the SecY/SEC61-alpha family. In terms of assembly, the SEC61 channel-forming translocon complex consists of channel-forming core components SEC61A1, SEC61B and SEC61G and different auxiliary components such as SEC62 and SEC63. The SEC61 channel associates with the multi-pass translocon (MPT) complex.

Its subcellular location is the endoplasmic reticulum membrane. Component of SEC61 channel-forming translocon complex that mediates transport of signal peptide-containing precursor polypeptides across the endoplasmic reticulum (ER). Forms a ribosome receptor and a gated pore in the ER membrane, both functions required for cotranslational translocation of nascent polypeptides. May cooperate with auxiliary protein SEC62, SEC63 and HSPA5/BiP to enable post-translational transport of small presecretory proteins. The SEC61 channel is also involved in ER membrane insertion of transmembrane proteins: it mediates membrane insertion of the first few transmembrane segments of proteins, while insertion of subsequent transmembrane regions of multi-pass membrane proteins is mediated by the multi-pass translocon (MPT) complex. The SEC61 channel cooperates with the translocating protein TRAM1 to import nascent proteins into the ER. Controls the passive efflux of calcium ions from the ER lumen to the cytosol through SEC61 channel, contributing to the maintenance of cellular calcium homeostasis. Plays a critical role in nephrogenesis, specifically at pronephros stage. The chain is Protein transport protein Sec61 subunit alpha isoform 1 (SEC61A1) from Canis lupus familiaris (Dog).